The following is a 183-amino-acid chain: Small ribosomal subunit protein uS4 (183 aa).

The 63-residue stretch at 106 to 168 folds into the S4 RNA-binding domain; the sequence is RRLETLVYKK…ETSPFTDENH (63 aa). Residues 158–183 form a disordered region; sequence NETSPFTDENHPLRMEMSGTKEEENE. A compositionally biased stretch (basic and acidic residues) spans 165 to 183; the sequence is DENHPLRMEMSGTKEEENE.

This sequence belongs to the universal ribosomal protein uS4 family. As to quaternary structure, part of the 30S ribosomal subunit. Contacts protein S5. The interaction surface between S4 and S5 is involved in control of translational fidelity.

Its function is as follows. One of the primary rRNA binding proteins, it binds directly to 16S rRNA where it nucleates assembly of the body of the 30S subunit. Functionally, with S5 and S12 plays an important role in translational accuracy. The chain is Small ribosomal subunit protein uS4 from Picrophilus torridus (strain ATCC 700027 / DSM 9790 / JCM 10055 / NBRC 100828 / KAW 2/3).